The chain runs to 314 residues: MKKNPKISLIGSGNIGGTLAHLISLRNLGDIVLFDVAEGVPQGKALDLMQAGTIAGSDIKIKGTNDYKDIEGSDAIIITAGLPRKPGISRDDLISINTGIMKNVAENVKKYAPDAFVIVITNPLDVMVYVMLKESGLPHNKVIGMAGVLDSSRFNLFLAEEFKVSVSNVNSTVLGGHGDAMVPLARYSTISGVPIPDLIKMGLSSNKNIEKIIDRTRNGGGEIVALLKTGSAYYAPAASAIEMLEAYLKDKRQILTCAAYLQGEYGVNDLYVGVPIIIGKEGVIKVVELQLTKEEKALFDKSVEGVKKLLDTIK.

Residues 11–16 (GSGNIG) and Asp35 contribute to the NAD(+) site. Arg84 and Arg90 together coordinate substrate. NAD(+) contacts are provided by residues Asn97 and 120 to 122 (ITN). Substrate contacts are provided by Asn122 and Arg153. His177 serves as the catalytic Proton acceptor.

The protein belongs to the LDH/MDH superfamily. MDH type 3 family.

It catalyses the reaction (S)-malate + NAD(+) = oxaloacetate + NADH + H(+). In terms of biological role, catalyzes the reversible oxidation of malate to oxaloacetate. This chain is Malate dehydrogenase, found in Rickettsia felis (strain ATCC VR-1525 / URRWXCal2) (Rickettsia azadi).